Here is a 525-residue protein sequence, read N- to C-terminus: Arylsulfatase G (525 aa).

An N-terminal signal peptide occupies residues 1 to 16 (MGWLFLKVLLVGMAFS). Positions 44, 45, and 84 each coordinate Ca(2+). The active-site Nucleophile is C84. Position 84 is a 3-oxoalanine (Cys) (C84). N-linked (GlcNAc...) asparagine glycosylation occurs at N117. Position 137 (K137) interacts with substrate. The active site involves H139. S162 is a substrate binding site. The N-linked (GlcNAc...) asparagine glycan is linked to N215. H251 serves as a coordination point for substrate. Ca(2+) contacts are provided by D302 and N303. N-linked (GlcNAc...) asparagine glycosylation is found at N356 and N497.

Belongs to the sulfatase family. Ca(2+) serves as cofactor. In terms of processing, N-glycosylated with both high mannose and complex type sugars. Post-translationally, the conversion to 3-oxoalanine (also known as C-formylglycine, FGly), of a serine or cysteine residue in prokaryotes and of a cysteine residue in eukaryotes, is critical for catalytic activity. The 63-kDa precursor undergoes proteolytic processing in two steps, yielding two fragments in the first step (apparent molecular masses of 44 and 18 kDa). In the second step, the 44-kDa fragment is processed further to the 34- and 10-kDa chains. The 10-kDa chain is a cleavage product of the 44-kDa fragment but linked to the 18-kDa chain through a disulfide bridge. Highly expressed in the spleen, kidney, liver, brain, and testis (at protein level).

The protein resides in the lysosome. It catalyses the reaction an aryl sulfate + H2O = a phenol + sulfate + H(+). The catalysed reaction is Hydrolysis of the 3-sulfate groups of the N-sulfo-D-glucosamine 3-O-sulfate units of heparin.. Functionally, displays arylsulfatase activity at acidic pH towards the artificial substrate p-nitrocatechol sulfate. Catalyzes the hydrolysis of the 3-sulfate groups of the N-sulfo-D-glucosamine 3-O-sulfate units of heparin. This Mus musculus (Mouse) protein is Arylsulfatase G (Arsg).